Reading from the N-terminus, the 429-residue chain is Hemoglobinase (429 aa).

The N-terminal stretch at 1–19 (MMLFSLFLISILHILLVKC) is a signal peptide. Residues 20 to 31 (QLDTNYEVSDET) constitute a propeptide that is removed on maturation. His151 is an active-site residue. The interval 288-309 (FQGSRDKSSSENDEPPMKPRHS) is disordered. A propeptide spanning residues 292 to 429 (RDKSSSENDE…INEAIIKICG (138 aa)) is cleaved from the precursor.

It belongs to the peptidase C13 family.

It carries out the reaction Hydrolysis of proteins and small molecule substrates at -Asn-|-Xaa- bonds.. Functionally, this protease is used by the parasite for degradation of the host globin. In Schistosoma mansoni (Blood fluke), this protein is Hemoglobinase.